Consider the following 208-residue polypeptide: Microtubule-associated protein Jupiter (208 aa).

2 disordered regions span residues 24–43 (RPPGGGSSDIFGSEMPQTPR) and 82–106 (RGQKTVDSHSRLFGEPTRPITPGKN). The residue at position 30 (Ser30) is a Phosphoserine. A Phosphothreonine modification is found at Thr41. The span at 82 to 93 (RGQKTVDSHSRL) shows a compositional bias: basic and acidic residues. Phosphothreonine occurs at positions 98 and 102. Residues Ser111, Ser139, and Ser150 each carry the phosphoserine modification. The interval 132–208 (HYNGKSGSVS…PPGGYSSGLW (77 aa)) is disordered. Residues 137 to 150 (SGSVSSASSSVSSS) show a composition bias toward low complexity. Polar residues-rich tracts occupy residues 151–165 (TENLKMNSGSRSEGN) and 178–189 (EYSQRQESSNGG).

The protein belongs to the MAP Jupiter family. Ubiquitous expression throughout development. Expressed during cell division in the syncytial embryo. Expressed in developing photoreceptors of the eye imaginal disk of the third larval stage. In adults, highly expressed in neurons of the brain, concentrated in axons. In the adult ovaries, expression accumulates in the germarium and the polar follicular cells as well as in the oocyte along the microtubule network.

The protein resides in the nucleus. It is found in the cytoplasm. Its subcellular location is the cytoskeleton. It localises to the spindle. Its function is as follows. Binds to all microtubule populations. The protein is Microtubule-associated protein Jupiter of Drosophila melanogaster (Fruit fly).